Reading from the N-terminus, the 353-residue chain is Probable dual-specificity RNA methyltransferase RlmN (353 aa).

The Proton acceptor role is filled by Glu90. The Radical SAM core domain maps to 96–326; the sequence is YKHGNSICIS…VTTRREMGSD (231 aa). Cys103 and Cys331 are disulfide-bonded. Residues Cys110, Cys114, and Cys117 each contribute to the [4Fe-4S] cluster site. Residues 157 to 158, Ser189, 212 to 214, and Asn288 contribute to the S-adenosyl-L-methionine site; these read GE and SLH. Cys331 (S-methylcysteine intermediate) is an active-site residue.

It belongs to the radical SAM superfamily. RlmN family. The cofactor is [4Fe-4S] cluster.

It localises to the cytoplasm. The catalysed reaction is adenosine(2503) in 23S rRNA + 2 reduced [2Fe-2S]-[ferredoxin] + 2 S-adenosyl-L-methionine = 2-methyladenosine(2503) in 23S rRNA + 5'-deoxyadenosine + L-methionine + 2 oxidized [2Fe-2S]-[ferredoxin] + S-adenosyl-L-homocysteine. It catalyses the reaction adenosine(37) in tRNA + 2 reduced [2Fe-2S]-[ferredoxin] + 2 S-adenosyl-L-methionine = 2-methyladenosine(37) in tRNA + 5'-deoxyadenosine + L-methionine + 2 oxidized [2Fe-2S]-[ferredoxin] + S-adenosyl-L-homocysteine. Specifically methylates position 2 of adenine 2503 in 23S rRNA and position 2 of adenine 37 in tRNAs. This Clostridium beijerinckii (strain ATCC 51743 / NCIMB 8052) (Clostridium acetobutylicum) protein is Probable dual-specificity RNA methyltransferase RlmN.